The sequence spans 352 residues: C-C chemokine receptor type 5 (352 aa).

Residues 1-30 (MDYQVSSPTYDIDYYTSEPCQKVNVKQIAA) are Extracellular-facing. Y3 is subject to Sulfotyrosine. Residues S6 and S7 are each glycosylated (O-linked (GalNAc...) serine). Residues Y10, Y14, and Y15 each carry the sulfotyrosine modification. Intrachain disulfides connect C20–C269 and C101–C178. The helical transmembrane segment at 31 to 58 (RLLPPLYSLVFIFGFVGNILVVLILINC) threads the bilayer. Topologically, residues 59–68 (KRLKSMTDIY) are cytoplasmic. Residues 69–89 (LLNLAISDLFFLLTVPFWAHY) traverse the membrane as a helical segment. At 90–102 (AAAQWDFGNTMCQ) the chain is on the extracellular side. Residues 103 to 124 (LLTGLYFIGFFSGIFFIILLTI) form a helical membrane-spanning segment. Topologically, residues 125–141 (DRYLAIVHAVFALKART) are cytoplasmic. A helical membrane pass occupies residues 142–166 (VTFGVVTSVITWVVAVFASLPGIIF). The Extracellular segment spans residues 167–198 (TRSQREGLHYTCSSHFPYSQYQFWKNFQTLKI). A helical membrane pass occupies residues 199-218 (VILGLVLPLLVMVICYSGIL). Topologically, residues 219–235 (KTLLRCRNEKKRHRAVR) are cytoplasmic. A helical membrane pass occupies residues 236–260 (LIFTIMIVYFLFWAPYNIVLLLNTF). The Extracellular segment spans residues 261–277 (QEFFGLNNCSSSNRLDQ). The chain crosses the membrane as a helical span at residues 278-301 (AMQVTETLGMTHCCINPIIYAFVG). Over 302 to 352 (EKFRNYLLVFFQKHIAKRFCKCCYIFQQEAPERASSVYTRSTGEQEISVGL) the chain is Cytoplasmic. S-palmitoyl cysteine attachment occurs at residues C321, C323, and C324. 4 positions are modified to phosphoserine; by BARK1: S336, S337, S342, and S349.

This sequence belongs to the G-protein coupled receptor 1 family. As to quaternary structure, interacts with PRAF2. Efficient ligand binding to CCL3/MIP-1alpha and CCL4/MIP-1beta requires sulfation, O-glycosylation and sialic acid modifications. Glycosylation on Ser-6 is required for efficient binding of CCL4. Interacts with GRK2. Interacts with ARRB1 and ARRB2. Interacts with CNIH4. Interacts with S100A4; this interaction stimulates T-lymphocyte chemotaxis. Sulfated on at least 2 of the N-terminal tyrosines. Sulfation is required for efficient binding of the chemokines, CCL3 and CCL4. Post-translationally, palmitoylation in the C-terminal is important for cell surface expression. In terms of processing, phosphorylation on serine residues in the C-terminal is stimulated by binding CC chemokines especially by APO-RANTES. O-glycosylated, but not N-glycosylated. Ser-6 appears to be the major site even if Ser-7 may be also O-glycosylated. Also sialylated glycans present which contribute to chemokine binding. Thr-16 and Ser-17 may also be glycosylated and, if so, with small moieties such as a T-antigen.

It localises to the cell membrane. Functionally, receptor for a number of inflammatory CC-chemokines including CCL3/MIP-1-alpha, CCL4/MIP-1-beta and RANTES and subsequently transduces a signal by increasing the intracellular calcium ion level. May play a role in the control of granulocytic lineage proliferation or differentiation. Participates in T-lymphocyte migration to the infection site by acting as a chemotactic receptor. In Rhinopithecus bieti (Black snub-nosed monkey), this protein is C-C chemokine receptor type 5 (CCR5).